The sequence spans 434 residues: Serine hydroxymethyltransferase (434 aa).

(6S)-5,6,7,8-tetrahydrofolate contacts are provided by residues L133 and 137–139 (GHL). K242 is subject to N6-(pyridoxal phosphate)lysine.

Belongs to the SHMT family. As to quaternary structure, homodimer. Pyridoxal 5'-phosphate is required as a cofactor.

The protein resides in the cytoplasm. The catalysed reaction is (6R)-5,10-methylene-5,6,7,8-tetrahydrofolate + glycine + H2O = (6S)-5,6,7,8-tetrahydrofolate + L-serine. Its pathway is one-carbon metabolism; tetrahydrofolate interconversion. It participates in amino-acid biosynthesis; glycine biosynthesis; glycine from L-serine: step 1/1. In terms of biological role, catalyzes the reversible interconversion of serine and glycine with tetrahydrofolate (THF) serving as the one-carbon carrier. This reaction serves as the major source of one-carbon groups required for the biosynthesis of purines, thymidylate, methionine, and other important biomolecules. Also exhibits THF-independent aldolase activity toward beta-hydroxyamino acids, producing glycine and aldehydes, via a retro-aldol mechanism. The protein is Serine hydroxymethyltransferase of Hyphomicrobium methylovorum.